The following is a 446-amino-acid chain: Tubulin gamma chain (446 aa).

Alanine 142–glycine 148 contributes to the GTP binding site.

The protein belongs to the tubulin family. In terms of assembly, interacts with mto1. Interacts with mto2.

The protein localises to the cytoplasm. The protein resides in the cytoskeleton. Its subcellular location is the microtubule organizing center. It is found in the spindle pole body. Functionally, tubulin is the major constituent of microtubules. The gamma chain is found at microtubule organizing centers (MTOC) such as the spindle poles or the centrosome, suggesting that it is involved in the minus-end nucleation of microtubule assembly. This is Tubulin gamma chain from Schizosaccharomyces pombe (strain 972 / ATCC 24843) (Fission yeast).